A 130-amino-acid polypeptide reads, in one-letter code: Small ribosomal subunit protein uS9 (130 aa).

Residues 108-130 (SREVERKKVGLRKARKRPQYSKR) form a disordered region. Residues 116 to 130 (VGLRKARKRPQYSKR) show a composition bias toward basic residues.

This sequence belongs to the universal ribosomal protein uS9 family.

The polypeptide is Small ribosomal subunit protein uS9 (Cellvibrio japonicus (strain Ueda107) (Pseudomonas fluorescens subsp. cellulosa)).